We begin with the raw amino-acid sequence, 521 residues long: MFS siderochrome iron transporter 1 (521 aa).

Residues methionine 1–glutamine 10 show a composition bias toward polar residues. Positions methionine 1–proline 29 are disordered. The span at aspartate 11–proline 29 shows a compositional bias: basic and acidic residues. The next 5 helical transmembrane spans lie at tryptophan 62–glycine 82, phenylalanine 99–cysteine 119, tryptophan 126–glutamine 146, phenylalanine 148–valine 168, and isoleucine 187–isoleucine 207. N-linked (GlcNAc...) asparagine glycosylation occurs at asparagine 209. 6 helical membrane passes run tyrosine 229–phenylalanine 249, leucine 330–leucine 350, valine 379–proline 399, lysine 404–alanine 424, leucine 431–isoleucine 451, and glycine 466–alanine 486. Asparagine 487 carries an N-linked (GlcNAc...) asparagine glycan. A helical transmembrane segment spans residues alanine 491–leucine 511.

The protein belongs to the major facilitator superfamily.

It is found in the membrane. In terms of biological role, major facilitator transporter probably involved in siderophore basidioferrin transmembrane transport. This Ceriporiopsis subvermispora (strain B) (White-rot fungus) protein is MFS siderochrome iron transporter 1.